Consider the following 127-residue polypeptide: Large ribosomal subunit protein uL22 (127 aa).

This sequence belongs to the universal ribosomal protein uL22 family. In terms of assembly, part of the 50S ribosomal subunit.

Its function is as follows. This protein binds specifically to 23S rRNA; its binding is stimulated by other ribosomal proteins, e.g. L4, L17, and L20. It is important during the early stages of 50S assembly. It makes multiple contacts with different domains of the 23S rRNA in the assembled 50S subunit and ribosome. In terms of biological role, the globular domain of the protein is located near the polypeptide exit tunnel on the outside of the subunit, while an extended beta-hairpin is found that lines the wall of the exit tunnel in the center of the 70S ribosome. The sequence is that of Large ribosomal subunit protein uL22 from Methylorubrum populi (strain ATCC BAA-705 / NCIMB 13946 / BJ001) (Methylobacterium populi).